The primary structure comprises 377 residues: Nitric oxide reductase FlRd-NAD(+) reductase (377 aa).

The protein belongs to the FAD-dependent oxidoreductase family. The cofactor is FAD.

It is found in the cytoplasm. The catalysed reaction is 2 reduced [nitric oxide reductase rubredoxin domain] + NAD(+) + H(+) = 2 oxidized [nitric oxide reductase rubredoxin domain] + NADH. The protein operates within nitrogen metabolism; nitric oxide reduction. Its function is as follows. One of at least two accessory proteins for anaerobic nitric oxide (NO) reductase. Reduces the rubredoxin moiety of NO reductase. This chain is Nitric oxide reductase FlRd-NAD(+) reductase, found in Escherichia coli O45:K1 (strain S88 / ExPEC).